Here is a 384-residue protein sequence, read N- to C-terminus: Probable 2-heptyl-3-hydroxy-4(1H)-quinolone synthase AqdB2 (384 aa).

The protein belongs to the 3-hydroxybenzoate 6-hydroxylase family.

It catalyses the reaction 2-heptyl-4(1H)-quinolone + NADH + O2 + H(+) = 2-heptyl-3-hydroxy-4(1H)-quinolone + NAD(+) + H2O. Its function is as follows. Involved in the degradation of the Pseudomonas aeruginosa quorum sensing signal molecule HHQ (2-heptyl-4-quinolone) to anthranilic acid. Probably catalyzes the hydroxylation of HHQ to PQS (2-heptyl-3-hydroxy-4-quinolone). The sequence is that of Probable 2-heptyl-3-hydroxy-4(1H)-quinolone synthase AqdB2 from Rhodococcus erythropolis (Arthrobacter picolinophilus).